Consider the following 317-residue polypeptide: MNCTRVLQILNPRPMPSPIMPVDVAMRICLAHSPPLRSFLSSYEDCKSRNLVNQYKPLRSCISSKTEDDTANITWKSPETKAKKKVVFADSKGMSLTAVHVFKEFEEDLMLDLQFELSDLEDAIVGLKAEKEKNFSLGFPQPAADYLDFRNRLKKNLVCLENCIIQERSVTGTVKVSNVSFEKVVHVRITFDSWKSHTDIPCTYMNNVYGCEDVDTFSFSIDLPSFVAPHEQVEFCLSYKTHDMTYWDNNDGKNYKLVHTENDSSQASVIQNATTDFKAQGKRPDMEFDQFGSPRTSSGFFPEWQSWGHIENNTPYW.

One can recognise a CBM21 domain in the interval 150 to 258 (RNRLKKNLVC…NNDGKNYKLV (109 aa)).

Interacts with PPP1CC catalytic subunit of PP1 and associates with glycogen. Forms complexes with glycogen phosphorylase, glycogen synthase and phosphorylase kinase which is necessary for its regulation of PP1 activity.

Acts as a glycogen-targeting subunit for PP1 and regulates its activity. Activates glycogen synthase, reduces glycogen phosphorylase activity and limits glycogen breakdown. This chain is Protein phosphatase 1 regulatory subunit 3C-B (ppp1r3cb), found in Danio rerio (Zebrafish).